The primary structure comprises 23 residues: Mu-conotoxin-like SxIIIB (23 aa).

Pyrrolidone carboxylic acid is present on Gln-1. Intrachain disulfides connect Cys-3–Cys-16, Cys-4–Cys-21, and Cys-11–Cys-22. An Alanine amide modification is found at Ala-23.

It belongs to the conotoxin M superfamily. Expressed by the venom duct.

It is found in the secreted. In terms of biological role, mu-conotoxins block voltage-gated sodium channels (Nav). The protein is Mu-conotoxin-like SxIIIB of Conus striolatus (Cone snail).